We begin with the raw amino-acid sequence, 162 residues long: Transcriptional repressor NrdR (162 aa).

The tract at residues 1–21 is disordered; it reads MNCPDCGDEQTRVIDTETSAD. Residues 3-34 fold into a zinc finger; sequence CPDCGDEQTRVIDTETSADGTSVRRRRECQRC. One can recognise an ATP-cone domain in the interval 49-139; the sequence is LQVKKRNGTI…VYKAFSEPQE (91 aa).

The protein belongs to the NrdR family. It depends on Zn(2+) as a cofactor.

In terms of biological role, negatively regulates transcription of bacterial ribonucleotide reductase nrd genes and operons by binding to NrdR-boxes. This is Transcriptional repressor NrdR from Halorubrum lacusprofundi (strain ATCC 49239 / DSM 5036 / JCM 8891 / ACAM 34).